We begin with the raw amino-acid sequence, 276 residues long: Diaminopimelate epimerase (276 aa).

Substrate is bound by residues Asn-13, Gln-46, and Asn-66. Catalysis depends on Cys-75, which acts as the Proton donor. Residues 76-77 (GN), Asn-159, Asn-192, and 210-211 (ER) contribute to the substrate site. Residue Cys-219 is the Proton acceptor of the active site. A substrate-binding site is contributed by 220–221 (GS).

This sequence belongs to the diaminopimelate epimerase family. In terms of assembly, homodimer.

It localises to the cytoplasm. It carries out the reaction (2S,6S)-2,6-diaminopimelate = meso-2,6-diaminopimelate. Its pathway is amino-acid biosynthesis; L-lysine biosynthesis via DAP pathway; DL-2,6-diaminopimelate from LL-2,6-diaminopimelate: step 1/1. Its function is as follows. Catalyzes the stereoinversion of LL-2,6-diaminopimelate (L,L-DAP) to meso-diaminopimelate (meso-DAP), a precursor of L-lysine and an essential component of the bacterial peptidoglycan. The chain is Diaminopimelate epimerase from Vibrio campbellii (strain ATCC BAA-1116).